Reading from the N-terminus, the 89-residue chain is Small ribosomal subunit protein bS20 (89 aa).

This sequence belongs to the bacterial ribosomal protein bS20 family.

Functionally, binds directly to 16S ribosomal RNA. The sequence is that of Small ribosomal subunit protein bS20 from Wolbachia pipientis subsp. Culex pipiens (strain wPip).